The following is a 213-amino-acid chain: Bcl-2-related ovarian killer protein (213 aa).

Serine 7 carries the post-translational modification Phosphoserine. Residues 15 to 45 (MDAFDRSPTDKELVAQAKALGREYVHARLLR) are interactions with ITPR1. Residues lysine 25 and lysine 32 each participate in a glycyl lysine isopeptide (Lys-Gly) (interchain with G-Cter in ubiquitin) cross-link. The short motif at 32–44 (KALGREYVHARLL) is the BH4 element. A BH3 motif is present at residues 67 to 83 (VCTVLLRLGDELEQIRP). The nuclear export signal stretch occupies residues 71 to 79 (LLRLGDELE). Residues 113–132 (HIFSAGITWGKVVSLYSVAA) carry the BH1 motif. Glycyl lysine isopeptide (Lys-Gly) (interchain with G-Cter in ubiquitin) cross-links involve residues lysine 160 and lysine 177. Residues 165-179 (WLRRRGGWTDVLKCV) carry the BH2 motif. Residues 190 to 210 (WLVATLCSFGRFLKAAFFLLL) form a helical membrane-spanning segment.

Belongs to the Bcl-2 family. In terms of assembly, monomer; positively regulates apoptotic process. Homodimer. Heterodimer. Oligomer; promoted by apoptotic stimuli and BH3-only proteins; mediates constitutive activation. Interacts (via BH4 domain) with ITPR1; enhances BOK expression and stabilization; limits apoptosis and prevents ubiquitination and then degradation; protects ITPR1 from proteolysis by CASP3 during apoptosis. Interacts with ITPR2 and ITPR3; binds most strongly to ITPR2, and barely to ITPR3; regulates their expression. Interacts with XPO1; translocates to the cytoplasm. Interacts with BNIP3; promotes oligomerization. Ubiquitinated by AMFR/gp78 E3 ubiquitin ligase complex; mediates degradation by ubiquitin-proteasome pathway in a VCP/p97-dependent manner; prevents from proapoptotic activity; promotes degradation of newly synthesized proteins that are not ITPR1 associated. Widely expressed. Highly expressed in brain, kidney, and spleen.

Its subcellular location is the mitochondrion membrane. The protein resides in the endoplasmic reticulum membrane. It is found in the mitochondrion inner membrane. The protein localises to the cytoplasm. It localises to the nucleus. Its subcellular location is the mitochondrion. The protein resides in the endoplasmic reticulum. It is found in the mitochondrion outer membrane. The protein localises to the early endosome membrane. It localises to the recycling endosome membrane. Its subcellular location is the nucleus outer membrane. The protein resides in the golgi apparatus. It is found in the cis-Golgi network membrane. The protein localises to the trans-Golgi network membrane. It localises to the membrane. In terms of biological role, apoptosis regulator that functions through different apoptotic signaling pathways. Plays a roles as pro-apoptotic protein that positively regulates intrinsic apoptotic process in a BAX- and BAK1-dependent manner or in a BAX- and BAK1-independent manner. In response to endoplasmic reticulum stress promotes mitochondrial apoptosis through downstream BAX/BAK1 activation and positive regulation of PERK-mediated unfolded protein response. Activates apoptosis independently of heterodimerization with survival-promoting BCL2 and BCL2L1 through induction of mitochondrial outer membrane permeabilization, in a BAX- and BAK1-independent manner, in response to inhibition of ERAD-proteasome degradation system, resulting in cytochrome c release. In response to DNA damage, mediates intrinsic apoptotic process in a TP53-dependent manner. Plays a role in granulosa cell apoptosis by CASP3 activation. Plays a roles as anti-apoptotic protein during neuronal apoptotic process, by negatively regulating poly ADP-ribose polymerase-dependent cell death through regulation of neuronal calcium homeostasis and mitochondrial bioenergetics in response to NMDA excitation. In addition to its role in apoptosis, may regulate trophoblast cell proliferation during the early stages of placental development, by acting on G1/S transition through regulation of CCNE1 expression. May also play a role as an inducer of autophagy by disrupting interaction between MCL1 and BECN1. The chain is Bcl-2-related ovarian killer protein from Mus musculus (Mouse).